We begin with the raw amino-acid sequence, 449 residues long: Phosphoglucosamine mutase (449 aa).

The active-site Phosphoserine intermediate is the S101. Mg(2+)-binding residues include S101, D242, D244, and D246. S101 carries the post-translational modification Phosphoserine.

The protein belongs to the phosphohexose mutase family. The cofactor is Mg(2+). Post-translationally, activated by phosphorylation.

The catalysed reaction is alpha-D-glucosamine 1-phosphate = D-glucosamine 6-phosphate. In terms of biological role, catalyzes the conversion of glucosamine-6-phosphate to glucosamine-1-phosphate. The sequence is that of Phosphoglucosamine mutase from Bradyrhizobium sp. (strain ORS 278).